The sequence spans 270 residues: uncharacterized protein (270 aa).

Histidine 171 (proton donor) is an active-site residue. Cysteine 261 (nucleophile) is an active-site residue.

Belongs to the DDAH family.

This is an uncharacterized protein from Aeropyrum pernix (strain ATCC 700893 / DSM 11879 / JCM 9820 / NBRC 100138 / K1).